We begin with the raw amino-acid sequence, 347 residues long: 3-methyl-2-oxobutanoate hydroxymethyltransferase 1, mitochondrial (347 aa).

A mitochondrion-targeting transit peptide spans 1-48 (MASSLTRNCSRFSKAISVRFMSNLPENTVYGGPKPQNPNQRVTLTHLR). Residues D83 and D122 each coordinate Mg(2+). 3-methyl-2-oxobutanoate-binding positions include 83–84 (DS), D122, and K152. E154 serves as a coordination point for Mg(2+). The active-site Proton acceptor is E222.

This sequence belongs to the PanB family. The cofactor is Mg(2+).

The protein localises to the mitochondrion. It catalyses the reaction 3-methyl-2-oxobutanoate + (6R)-5,10-methylene-5,6,7,8-tetrahydrofolate + H2O = 2-dehydropantoate + (6S)-5,6,7,8-tetrahydrofolate. Its pathway is cofactor biosynthesis; (R)-pantothenate biosynthesis; (R)-pantoate from 3-methyl-2-oxobutanoate: step 1/2. In terms of biological role, catalyzes the reversible reaction in which hydroxymethyl group from 5,10-methylenetetrahydrofolate is transferred onto alpha-ketoisovalerate to form ketopantoate. This chain is 3-methyl-2-oxobutanoate hydroxymethyltransferase 1, mitochondrial (KPHMT1), found in Arabidopsis thaliana (Mouse-ear cress).